The following is a 196-amino-acid chain: Large ribosomal subunit protein bL9 (196 aa).

The tract at residues 172-196 (NESARPEAFFDPEAEIEQEEGEENA) is disordered. Positions 181–196 (FDPEAEIEQEEGEENA) are enriched in acidic residues.

This sequence belongs to the bacterial ribosomal protein bL9 family.

Binds to the 23S rRNA. The sequence is that of Large ribosomal subunit protein bL9 from Chelativorans sp. (strain BNC1).